The chain runs to 51 residues: Perinerin (51 aa).

Its function is as follows. Antibacterial activity against both Gram-negative and Gram-positive bacteria. Shows marked activity against P.aeruginosa, B.megaterium, A.viridans, moderate activity against E.coli K-12, S.aureus and M.luteus, and minor activity against P.vulgaris. Antifungal activity against P.heliothis. In Perinereis aibuhitensis (Korean lugworm), this protein is Perinerin.